The chain runs to 338 residues: Cap-specific mRNA (nucleoside-2'-O-)-methyltransferase (338 aa).

Residue Y22 participates in mRNA binding. Positions 39, 66, 68, 72, 95, 97, 116, and 138 each coordinate S-adenosyl-L-methionine. Positions 169 to 249 (PAASSLKWRC…NKIIRNRIII (81 aa)) are binding to NPH-I. The segment at 169 to 333 (PAASSLKWRC…NTKKSVRGNK (165 aa)) is binding to Rap94. The For methyltransferase activity role is filled by K175. MRNA is bound by residues 177 to 180 (RCPF), D182, 205 to 207 (SAE), and E233. Residues 305–338 (HHEPTQRKVPSKNTMLKSRNTKKSVRGNKQGRRT) form a disordered region. The segment covering 323-338 (RNTKKSVRGNKQGRRT) has biased composition (basic residues).

The protein belongs to the class I-like SAM-binding methyltransferase superfamily. Poxvirus/kinetoplastid 2'-O-MTase family. Interacts with poly(A) polymerase catalytic subunit OPG063. Interacts with OPG109 and OPG123; these interactions might help linking transcription to capping and polyadenylation.

Its subcellular location is the virion. It catalyses the reaction a 5'-end (N(7)-methyl 5'-triphosphoguanosine)-ribonucleoside in mRNA + S-adenosyl-L-methionine = a 5'-end (N(7)-methyl 5'-triphosphoguanosine)-(2'-O-methyl-ribonucleoside) in mRNA + S-adenosyl-L-homocysteine + H(+). Displays methyltransferase, positive regulation of the poly(A) polymerase and transcription elongation activities. Involved in the modification of both mRNA ends and in intermediate and late gene positive transcription elongation. At the mRNAs 5' end, methylates the ribose 2' OH group of the first transcribed nucleotide, thereby producing a 2'-O-methylpurine cap. At the 3' end, functions as a processivity factor which stimulates the activity of the viral poly(A) polymerase OPG063 that creates mRNA's poly(A) tail. In the presence of OPG102, OPG063 does not dissociate from the RNA allowing tail elongation to around 250 adenylates. In Oryctolagus cuniculus (Rabbit), this protein is Cap-specific mRNA (nucleoside-2'-O-)-methyltransferase (OPG102).